A 428-amino-acid polypeptide reads, in one-letter code: Dual-specificity RNA methyltransferase RlmN (428 aa).

Over residues 1–17 (MPLHRVEALGEPQDRTG) the composition is skewed to basic and acidic residues. Residues 1–44 (MPLHRVEALGEPQDRTGKTFSGRTNGPISSPLTDTERRMSIPQN) form a disordered region. Residues 18 to 33 (KTFSGRTNGPISSPLT) are compositionally biased toward polar residues. Residue Glu-136 is the Proton acceptor of the active site. One can recognise a Radical SAM core domain in the interval 142-381 (EDDRGALCVS…APIRMPRGRD (240 aa)). Cys-149 and Cys-386 form a disulfide bridge. Cys-156, Cys-160, and Cys-163 together coordinate [4Fe-4S] cluster. S-adenosyl-L-methionine contacts are provided by residues 212–213 (GE), Ser-244, 266–268 (SLH), and Asn-343. The S-methylcysteine intermediate role is filled by Cys-386.

This sequence belongs to the radical SAM superfamily. RlmN family. It depends on [4Fe-4S] cluster as a cofactor.

The protein resides in the cytoplasm. It catalyses the reaction adenosine(2503) in 23S rRNA + 2 reduced [2Fe-2S]-[ferredoxin] + 2 S-adenosyl-L-methionine = 2-methyladenosine(2503) in 23S rRNA + 5'-deoxyadenosine + L-methionine + 2 oxidized [2Fe-2S]-[ferredoxin] + S-adenosyl-L-homocysteine. The enzyme catalyses adenosine(37) in tRNA + 2 reduced [2Fe-2S]-[ferredoxin] + 2 S-adenosyl-L-methionine = 2-methyladenosine(37) in tRNA + 5'-deoxyadenosine + L-methionine + 2 oxidized [2Fe-2S]-[ferredoxin] + S-adenosyl-L-homocysteine. Functionally, specifically methylates position 2 of adenine 2503 in 23S rRNA and position 2 of adenine 37 in tRNAs. m2A2503 modification seems to play a crucial role in the proofreading step occurring at the peptidyl transferase center and thus would serve to optimize ribosomal fidelity. The chain is Dual-specificity RNA methyltransferase RlmN from Rhodospirillum rubrum (strain ATCC 11170 / ATH 1.1.1 / DSM 467 / LMG 4362 / NCIMB 8255 / S1).